A 174-amino-acid polypeptide reads, in one-letter code: Ubiquinone biosynthesis accessory factor UbiT (174 aa).

Positions 45–133 constitute an SCP2 domain; it reads LDDGELEFLE…LGLYVKNLMD (89 aa).

Belongs to the UbiT family.

The protein operates within cofactor biosynthesis; ubiquinone biosynthesis. In terms of biological role, required for O(2)-independent ubiquinone (coenzyme Q) biosynthesis. Likely functions as an accessory factor. The sequence is that of Ubiquinone biosynthesis accessory factor UbiT from Escherichia coli O157:H7.